Consider the following 151-residue polypeptide: Calmodulin (151 aa).

EF-hand domains lie at 10-45 (EQIS…LGQN), 46-81 (PTEA…KMKD), 83-118 (DSEE…LGEK), and 119-151 (LTDE…MLSK). Residues D23, D25, D27, S29, E34, D59, D61, N63, T65, E70, D96, D98, N100, E107, D132, D134, D136, and E143 each contribute to the Ca(2+) site.

Belongs to the calmodulin family.

Its function is as follows. Calmodulin mediates the control of a large number of enzymes, ion channels and other proteins by Ca(2+). Among the enzymes to be stimulated by the calmodulin-Ca(2+) complex are a number of protein kinases and phosphatases. This is Calmodulin from Pneumocystis carinii.